The sequence spans 320 residues: o-succinylbenzoate synthase (320 aa).

K133 acts as the Proton donor in catalysis. Residues D161, E190, and D213 each contribute to the Mg(2+) site. The active-site Proton acceptor is K235.

It belongs to the mandelate racemase/muconate lactonizing enzyme family. MenC type 1 subfamily. Requires a divalent metal cation as cofactor.

It carries out the reaction (1R,6R)-6-hydroxy-2-succinyl-cyclohexa-2,4-diene-1-carboxylate = 2-succinylbenzoate + H2O. It participates in quinol/quinone metabolism; 1,4-dihydroxy-2-naphthoate biosynthesis; 1,4-dihydroxy-2-naphthoate from chorismate: step 4/7. It functions in the pathway quinol/quinone metabolism; menaquinone biosynthesis. Converts 2-succinyl-6-hydroxy-2,4-cyclohexadiene-1-carboxylate (SHCHC) to 2-succinylbenzoate (OSB). The sequence is that of o-succinylbenzoate synthase from Shigella boydii serotype 18 (strain CDC 3083-94 / BS512).